Consider the following 245-residue polypeptide: 5'-nucleotidase SurE (245 aa).

A divalent metal cation contacts are provided by aspartate 8, aspartate 9, serine 39, and asparagine 97.

This sequence belongs to the SurE nucleotidase family. Requires a divalent metal cation as cofactor.

It localises to the cytoplasm. The catalysed reaction is a ribonucleoside 5'-phosphate + H2O = a ribonucleoside + phosphate. Functionally, nucleotidase that shows phosphatase activity on nucleoside 5'-monophosphates. The protein is 5'-nucleotidase SurE of Clostridium kluyveri (strain NBRC 12016).